Here is a 302-residue protein sequence, read N- to C-terminus: B3 domain-containing protein At3g17010 (302 aa).

The segment at residues 21-116 is a DNA-binding region (TF-B3 1); that stretch reads FFKIFQRADL…VFHVNIYEQN (96 aa). The segment at 123 to 192 is disordered; that stretch reads PRKFQTMGPS…KVKKKSKSKS (70 aa). A compositionally biased stretch (basic and acidic residues) spans 135–174; it reads IKKEEGENSLIDVKKEEESDESPGRAEFLVRKKKTEDSKS. Residues 175-192 are compositionally biased toward basic residues; it reads SKKKMTRNKVKKKSKSKS. The TF-B3 2 DNA-binding region spans 199–292; it reads VPEFKITIRK…EFVLLTSKKN (94 aa).

Its subcellular location is the nucleus. The sequence is that of B3 domain-containing protein At3g17010 from Arabidopsis thaliana (Mouse-ear cress).